The primary structure comprises 434 residues: AT-rich interactive domain-containing protein 5 (434 aa).

The segment at M1–V120 is disordered. 3 stretches are compositionally biased toward basic and acidic residues: residues E25–K37, D43–L54, and R78–T90. The span at D92–E102 shows a compositional bias: polar residues. Residues P142 to R233 form the ARID domain. The disordered stretch occupies residues E237 to A274. One can recognise a sHSP domain in the interval A336–Q434.

The protein belongs to the small heat shock protein (HSP20) family.

It localises to the nucleus. The chain is AT-rich interactive domain-containing protein 5 (ARID5) from Arabidopsis thaliana (Mouse-ear cress).